The primary structure comprises 301 residues: Oxygen-dependent coproporphyrinogen-III oxidase (301 aa).

A substrate-binding site is contributed by S94. Residues H98 and H108 each contribute to the a divalent metal cation site. H108 functions as the Proton donor in the catalytic mechanism. 110 to 112 provides a ligand contact to substrate; the sequence is NVR. A divalent metal cation is bound by residues H147 and H177. The segment at 242 to 277 is important for dimerization; it reads YVEFNLVYDRGTLFGLQSGGRTESILMSMPPLARWE. 260–262 is a binding site for substrate; it reads GGR.

It belongs to the aerobic coproporphyrinogen-III oxidase family. As to quaternary structure, homodimer. It depends on a divalent metal cation as a cofactor.

It is found in the cytoplasm. It carries out the reaction coproporphyrinogen III + O2 + 2 H(+) = protoporphyrinogen IX + 2 CO2 + 2 H2O. The protein operates within porphyrin-containing compound metabolism; protoporphyrin-IX biosynthesis; protoporphyrinogen-IX from coproporphyrinogen-III (O2 route): step 1/1. Involved in the heme biosynthesis. Catalyzes the aerobic oxidative decarboxylation of propionate groups of rings A and B of coproporphyrinogen-III to yield the vinyl groups in protoporphyrinogen-IX. The polypeptide is Oxygen-dependent coproporphyrinogen-III oxidase (Photobacterium profundum (strain SS9)).